We begin with the raw amino-acid sequence, 185 residues long: Acireductone dioxygenase (185 aa).

The Fe(2+) site is built by H96, H98, E102, and H140. Ni(2+) contacts are provided by H96, H98, E102, and H140.

It belongs to the acireductone dioxygenase (ARD) family. As to quaternary structure, monomer. The cofactor is Fe(2+). It depends on Ni(2+) as a cofactor.

The catalysed reaction is 1,2-dihydroxy-5-(methylsulfanyl)pent-1-en-3-one + O2 = 3-(methylsulfanyl)propanoate + CO + formate + 2 H(+). It catalyses the reaction 1,2-dihydroxy-5-(methylsulfanyl)pent-1-en-3-one + O2 = 4-methylsulfanyl-2-oxobutanoate + formate + 2 H(+). It participates in amino-acid biosynthesis; L-methionine biosynthesis via salvage pathway; L-methionine from S-methyl-5-thio-alpha-D-ribose 1-phosphate: step 5/6. In terms of biological role, catalyzes 2 different reactions between oxygen and the acireductone 1,2-dihydroxy-3-keto-5-methylthiopentene (DHK-MTPene) depending upon the metal bound in the active site. Fe-containing acireductone dioxygenase (Fe-ARD) produces formate and 2-keto-4-methylthiobutyrate (KMTB), the alpha-ketoacid precursor of methionine in the methionine recycle pathway. Ni-containing acireductone dioxygenase (Ni-ARD) produces methylthiopropionate, carbon monoxide and formate, and does not lie on the methionine recycle pathway. In Marinobacter nauticus (strain ATCC 700491 / DSM 11845 / VT8) (Marinobacter aquaeolei), this protein is Acireductone dioxygenase.